The following is a 414-amino-acid chain: Phosphopentomutase (414 aa).

Aspartate 10, aspartate 309, histidine 314, aspartate 350, histidine 351, and histidine 362 together coordinate Mn(2+).

The protein belongs to the phosphopentomutase family. Mn(2+) serves as cofactor.

It localises to the cytoplasm. It catalyses the reaction 2-deoxy-alpha-D-ribose 1-phosphate = 2-deoxy-D-ribose 5-phosphate. It carries out the reaction alpha-D-ribose 1-phosphate = D-ribose 5-phosphate. It participates in carbohydrate degradation; 2-deoxy-D-ribose 1-phosphate degradation; D-glyceraldehyde 3-phosphate and acetaldehyde from 2-deoxy-alpha-D-ribose 1-phosphate: step 1/2. Isomerase that catalyzes the conversion of deoxy-ribose 1-phosphate (dRib-1-P) and ribose 1-phosphate (Rib-1-P) to deoxy-ribose 5-phosphate (dRib-5-P) and ribose 5-phosphate (Rib-5-P), respectively. The sequence is that of Phosphopentomutase from Hahella chejuensis (strain KCTC 2396).